The sequence spans 313 residues: Mas-related G-protein coupled receptor member A4 (313 aa).

Residues Met1–Asn25 lie on the Extracellular side of the membrane. A glycan (N-linked (GlcNAc...) asparagine) is linked at Asn10. Residues Leu26–Leu46 traverse the membrane as a helical segment. Residues Gly47–Ala54 lie on the Cytoplasmic side of the membrane. The helical transmembrane segment at Phe55 to Ile75 threads the bilayer. The N-linked (GlcNAc...) asparagine glycan is linked to Asn76. At Asn76–His93 the chain is on the extracellular side. A helical transmembrane segment spans residues Cys94 to Ser114. Residues Thr115–Thr137 lie on the Cytoplasmic side of the membrane. A helical transmembrane segment spans residues Val138 to Cys158. Over His159 to Pro182 the chain is Extracellular. The helical transmembrane segment at Met183–Gly203 threads the bilayer. At Ala204–Thr219 the chain is on the cytoplasmic side. A helical transmembrane segment spans residues Val220 to Ile240. Topologically, residues Asn241–Ser255 are extracellular. A helical transmembrane segment spans residues Leu256–Phe276. Over Arg277–Pro313 the chain is Cytoplasmic.

Belongs to the G-protein coupled receptor 1 family. Mas subfamily. Expressed in a subset of sensory neurons that includes nociceptors. Expressed in the subclass of non-peptidergic sensory neurons that are IB4(+) and VR1(-).

It is found in the cell membrane. In terms of biological role, orphan receptor. May be a receptor for RFamide-family neuropeptides such as NPFF and NPAF, which are analgesic in vivo. May regulate nociceptor function and/or development, including the sensation or modulation of pain. The sequence is that of Mas-related G-protein coupled receptor member A4 (Mrgpra4) from Mus musculus (Mouse).